The following is a 577-amino-acid chain: Moesin (577 aa).

The 294-residue stretch at 2 to 295 (PKTINVRVTT…GNHELYMRRR (294 aa)) folds into the FERM domain. Position 74 is a phosphoserine (Ser74). Lys79 bears the N6-acetyllysine mark. Position 83 is an N6-succinyllysine (Lys83). The [IL]-x-C-x-x-[DE] motif motif lies at 115 to 120 (IYCPPE). The residue at position 116 (Tyr116) is a Phosphotyrosine. At Cys117 the chain carries S-nitrosocysteine. N6-acetyllysine occurs at positions 139 and 165. Positions 376-414 (EQERKRAQSEAEKLAKERQEAEEAKEALLKASRDQKKTQ) are enriched in basic and acidic residues. 2 disordered regions span residues 376-415 (EQER…KTQE) and 434-518 (ARQK…NERV). Ser407 carries the post-translational modification Phosphoserine. Acidic residues predominate over residues 476–487 (AENDQDEQDENG). A compositionally biased stretch (basic and acidic residues) spans 492 to 518 (ADLRADAMAKDRSEEERTTEAEKNERV). Ser527 bears the Phosphoserine mark. Residue Thr558 is modified to Phosphothreonine; by ROCK2 and STK10.

Binds NHERF1. In resting T-cells, part of a PAG1-NHERF1-MSN complex which is disrupted upon TCR activation. Interacts with PPP1R16B. Interacts with PDZD8. Interacts with SELPLG and SYK; mediates the activation of SYK by SELPLG. Interacts with PDPN (via cytoplasmic domain); activates RHOA and promotes epithelial-mesenchymal transition. Interacts with SPN/CD43 cytoplasmic tail, CD44 and ICAM2. Phosphorylation on Thr-558 is crucial for the formation of microvilli-like structures. Phosphorylation by ROCK2 suppresses the head-to-tail association of the N-terminal and C-terminal halves resulting in an opened conformation which is capable of actin and membrane-binding. Phosphorylation on Thr-558 by STK10 negatively regulates lymphocyte migration and polarization. Post-translationally, S-nitrosylation of Cys-117 is induced by interferon-gamma and oxidatively-modified low-densitity lipoprotein (LDL(ox)) implicating the iNOS-S100A8/9 transnitrosylase complex.

It is found in the cell membrane. The protein resides in the cytoplasm. The protein localises to the cytoskeleton. It localises to the apical cell membrane. Its subcellular location is the cell projection. It is found in the microvillus membrane. The protein resides in the microvillus. Its activity is regulated as follows. A head-to-tail association, of the N-terminal and C-terminal halves results in a closed conformation (inactive form) which is incapable of actin or membrane-binding. Its function is as follows. Probably involved in connections of major cytoskeletal structures to the plasma membrane. Plays a role in regulating the proliferation, migration, and adhesion of human lymphoid cells and participates in immunologic synapse formation. The protein is Moesin of Sus scrofa (Pig).